Consider the following 466-residue polypeptide: MLHLDYTFNVSDATSTSSIIIVSRRELANLRIMVIIASAISIVFSLIAIFWRWSRRRTIREQFHIALFSVLFIRSIVQMIHPCLALSDPFFWAPKHRCFTIGFFLLVLVRMTDYWIFINILHNALLVLFPHVDTERRGLYRFRHTVFTLSFVIPLTIGGLAFTNKRNTFVNLQTRCYLPYTPVRFMFGLNWSFDYALSIAIIALQTCMFISIRRKIKRFKKYSHQQTNVFDTLNVIDSYPTAPDQVALPPFPDTNSTLTYTPSNSQSIYSSQSQPSPYSRPLLSSVHPNLPPGSQSTPANLNQSGIHFEQDFRDSPNRTNGLEDHTSFKLSSPLTSDEDGASSVLAAYGNDMQDDPLLKQRKRILSQSKFLFAYPAIFIFMWILPQIQIIVILAQPLHCSGSCKRFAFVAVFADNFVAIFIALSDFIWICYRGYTYLKERDSSKSYWDQIKELTLKWWRGKFGEEK.

A run of 5 helical transmembrane segments spans residues 30–50 (LRIMVIIASAISIVFSLIAIF), 65–85 (IALFSVLFIRSIVQMIHPCLA), 101–121 (IGFFLLVLVRMTDYWIFINIL), 144–164 (HTVFTLSFVIPLTIGGLAFTN), and 192–212 (SFDYALSIAIIALQTCMFISI). Over residues 262–285 (PSNSQSIYSSQSQPSPYSRPLLSS) the composition is skewed to low complexity. Residues 262 to 337 (PSNSQSIYSS…FKLSSPLTSD (76 aa)) form a disordered region. The span at 292–305 (PGSQSTPANLNQSG) shows a compositional bias: polar residues. Residues 308–327 (FEQDFRDSPNRTNGLEDHTS) show a composition bias toward basic and acidic residues. 2 consecutive transmembrane segments (helical) span residues 372–392 (FAYPAIFIFMWILPQIQIIVI) and 409–429 (VAVFADNFVAIFIALSDFIWI).

The protein belongs to the G-protein coupled receptor GPR1/git3 family. As to quaternary structure, interacts with G protein alpha subunit gpa2; the interaction is direct and leads to activation of gpa2 upon glucose stimulation.

Its subcellular location is the membrane. Its function is as follows. G protein-coupled receptor (GPCR) that senses glucose and signals via the heterotrimeric G protein alpha subunit gpa2 to activate adenylate cyclase and PKA signaling, and suppress sexual development and gluconeogenesis. In Schizosaccharomyces pombe (strain 972 / ATCC 24843) (Fission yeast), this protein is Glucose receptor protein git3 (git3).